Consider the following 53-residue polypeptide: Weak toxin NWT (53 aa).

3 cysteine pairs are disulfide-bonded: Cys6–Cys11, Cys17–Cys33, and Cys37–Cys48.

The protein belongs to the three-finger toxin family. Ancestral subfamily. Orphan group II sub-subfamily. In terms of tissue distribution, expressed by the venom gland.

It is found in the secreted. In terms of biological role, binds with low affinity and weakly inhibits muscle nicotinic acetylcholine receptor (nAChR). This is Weak toxin NWT from Naja kaouthia (Monocled cobra).